Here is a 1083-residue protein sequence, read N- to C-terminus: Glutamate receptor-interacting protein 2 (1083 aa).

PDZ domains are found at residues 58–141, 156–244, and 258–342; these read IVEL…EYEL, TIEI…EYDV, and LVEI…LPAH. A compositionally biased stretch (polar residues) spans 408 to 422; it reads AGTPGFSSQNSNTLP. Positions 408-460 are disordered; that stretch reads AGTPGFSSQNSNTLPRTVHPMSPRTTMNRRRQKRKDHKSSLSLASSTVGPGGQ. A compositionally biased stretch (basic residues) spans 434 to 444; it reads MNRRRQKRKDH. PDZ domains follow at residues 468-555, 569-652, and 667-749; these read EIIL…EIEF, HVKL…RKDE, and TVEL…KKQT. Disordered stretches follow at residues 754 to 783, 853 to 872, and 936 to 965; these read PQRLSDSMNEGSDPEDDLTDSQKTSKLSEI, NEQDWEKPTRYPSQPNGLET, and GSHHISSNSPKKENKLSQDARSKKEEVHNA. Positions 774–783 are enriched in polar residues; it reads SQKTSKLSEI. Residues 945–963 are compositionally biased toward basic and acidic residues; the sequence is PKKENKLSQDARSKKEEVH. Residues 974–1056 form the PDZ 7 domain; the sequence is KVTVQKDMDT…RLDLVISRGL (83 aa).

Belongs to the GRIP2 family. In terms of tissue distribution, enriched in the mitochondrial cloud of stage I oocytes, before becoming concentrated at the tip of the vegetal cortex in stage II oocytes. Expression becomes localized to the germ plasm of stage III-IV oocytes and early cleavage stages. At the tailbud stage, localizes to the migrating primordial germ cells (PGCs) until PGC migration is complete (stage 40), at which point expression disappears. In the adult, expressed in the brain, ovary, eye, muscle, spinal cord and very weakly in adipocytes.

The protein resides in the cytoplasm. Its function is as follows. Plays an important role in primordial germ cell (PGC) maintenance and efficiency of PGC migration. This chain is Glutamate receptor-interacting protein 2, found in Xenopus laevis (African clawed frog).